Reading from the N-terminus, the 411-residue chain is Phospholipase ABHD3 (411 aa).

A helical; Signal-anchor for type II membrane protein membrane pass occupies residues 25-45 (VGFFGSGVGLSLILGFSVAYA). One can recognise an AB hydrolase-1 domain in the interval 140-233 (PTILLLPGLT…MLLLNYLGKI (94 aa)). Active-site charge relay system residues include S220, D346, and H375.

The protein belongs to the AB hydrolase superfamily. AB hydrolase 4 family. As to expression, widely expressed with higher expression in liver.

The protein localises to the membrane. The enzyme catalyses a 1,2-diacyl-sn-glycero-3-phosphocholine + H2O = a 1-acyl-sn-glycero-3-phosphocholine + a fatty acid + H(+). The catalysed reaction is a 1,2-diacyl-sn-glycero-3-phosphocholine + H2O = a 2-acyl-sn-glycero-3-phosphocholine + a fatty acid + H(+). It catalyses the reaction 1-tetradecanoyl-2-(9Z,12Z-octadecadienoyl)-sn-glycero-3-phosphocholine + H2O = 2-(9Z,12Z-octadecadienoyl)-sn-glycero-3-phosphocholine + tetradecanoate + H(+). It carries out the reaction 1-tetradecanoyl-2-(9Z,12Z-octadecadienoyl)-sn-glycero-3-phosphocholine + H2O = 1-tetradecanoyl-sn-glycero-3-phosphocholine + (9Z,12Z)-octadecadienoate + H(+). The enzyme catalyses 1-tetradecanoyl-2-(5Z,8Z,11Z,14Z-eicosatetraenoyl)-sn-glycero-3-phosphocholine + H2O = 2-(5Z,8Z,11Z,14Z)-eicosatetraenoyl-sn-glycero-3-phosphocholine + tetradecanoate + H(+). The catalysed reaction is 1-tetradecanoyl-2-(4Z,7Z,10Z,13Z,16Z,19Z-docosahexaenoyl)-sn-glycero-3-phosphocholine + H2O = 2-(4Z,7Z,10Z,13Z,16Z,19Z-docosahexaenoyl)-sn-glycero-3-phosphocholine + tetradecanoate + H(+). It catalyses the reaction 1,2-ditetradecanoyl-sn-glycero-3-phosphocholine + H2O = 2-tetradecanoyl-sn-glycero-3-phosphocholine + tetradecanoate + H(+). It carries out the reaction 1-octadecanoyl-2-acetyl-sn-glycero-3-phosphocholine + H2O = 1-octadecanoyl-sn-glycero-3-phosphocholine + acetate + H(+). The enzyme catalyses 1,2-ditetradecanoyl-sn-glycero-3-phosphocholine + H2O = 1-tetradecanoyl-sn-glycero-3-phosphocholine + tetradecanoate + H(+). The catalysed reaction is 1-octadecanoyl-2-pentanoyl-sn-glycero-3-phosphocholine + H2O = pentanoate + 1-octadecanoyl-sn-glycero-3-phosphocholine + H(+). It catalyses the reaction 1-octadecanoyl-2-hexanoyl-sn-glycero-3-phosphocholine + H2O = hexanoate + 1-octadecanoyl-sn-glycero-3-phosphocholine + H(+). It carries out the reaction 1-octadecanoyl-2-octanoyl-sn-glycero-3-phosphocholine + H2O = 1-octadecanoyl-sn-glycero-3-phosphocholine + octanoate + H(+). The enzyme catalyses 1-octadecanoyl-2-nonanoyl-sn-glycero-3-phosphocholine + H2O = nonanoate + 1-octadecanoyl-sn-glycero-3-phosphocholine + H(+). The catalysed reaction is 1-O-hexadecyl-2-nonadioyl-sn-glycero-3-phosphocholine + H2O = nonanedioate + 1-O-hexadecyl-sn-glycero-3-phosphocholine + H(+). It catalyses the reaction 1-hexadecanoyl-2-nonadioyl-sn-glycero-3-phosphocholine + H2O = nonanedioate + 1-hexadecanoyl-sn-glycero-3-phosphocholine + H(+). It carries out the reaction 1-hexadecanoyl-2-(9-oxononanoyl)-sn-glycero-3-phosphocholine + H2O = 9-oxononanoate + 1-hexadecanoyl-sn-glycero-3-phosphocholine + H(+). The enzyme catalyses 1-hexadecanoyl-2-(5-oxopentanoyl)-sn-glycero-3-phosphocholine + H2O = 5-oxopentanoate + 1-hexadecanoyl-sn-glycero-3-phosphocholine + H(+). The catalysed reaction is 1-hexadecanoyl-2-glutaroyl-sn-glycero-3-phosphocholine + H2O = glutarate + 1-hexadecanoyl-sn-glycero-3-phosphocholine + H(+). It catalyses the reaction 1-O-hexadecyl-2-acetyl-sn-glycero-3-phosphocholine + H2O = 1-O-hexadecyl-sn-glycero-3-phosphocholine + acetate + H(+). Functionally, phospholipase that may play a role in phospholipids remodeling. May selectively cleave myristate (C14)-containing phosphatidylcholines through its predominant phospholipase 1 activity, cleaving preferentially acyl groups in sn1 position. In parallel, may have a minor phospholipase 2 activity acting on acyl groups in position sn2. In addition to (C14)-containing phosphatidylcholines, may also act on other medium-chain-containing and oxidatively truncated phospholipids. This Mus musculus (Mouse) protein is Phospholipase ABHD3.